The primary structure comprises 405 residues: Accessory Sec system protein translocase subunit SecY2 (405 aa).

The next 10 helical transmembrane spans lie at 14–34 (LFTL…LPFV), 63–83 (LSIF…WQMF), 104–124 (MYLT…RLPV), 131–151 (ILVV…LVWL), 156–176 (ASMG…LNIP), 191–211 (GIIV…ALMY), 247–267 (MYVM…GFIF), 285–305 (PLWV…FAFV), 343–363 (FSVI…LFVL), and 368–388 (LLRL…IFTI).

The protein belongs to the SecY/SEC61-alpha family. SecY2 subfamily. In terms of assembly, component of the accessory SecA2/SecY2 protein translocase complex required to export cell wall proteins. May form heterotrimers with SecE and SecG subunits.

The protein resides in the cell membrane. Part of the accessory SecA2/SecY2 system specifically required for export of possible cell wall proteins. The central subunit of a protein translocation channel. The sequence is that of Accessory Sec system protein translocase subunit SecY2 from Streptococcus pneumoniae (strain CGSP14).